Here is a 60-residue protein sequence, read N- to C-terminus: Short neurotoxin 1 (60 aa).

4 cysteine pairs are disulfide-bonded: Cys-3-Cys-22, Cys-17-Cys-39, Cys-41-Cys-52, and Cys-53-Cys-58.

It belongs to the three-finger toxin family. Short-chain subfamily. Type I alpha-neurotoxin sub-subfamily. As to expression, expressed by the venom gland.

The protein resides in the secreted. Its function is as follows. Binds to muscle nicotinic acetylcholine receptor (nAChR) and inhibit acetylcholine from binding to the receptor, thereby impairing neuromuscular transmission. The protein is Short neurotoxin 1 of Hydrophis schistosus (Beaked sea snake).